Reading from the N-terminus, the 219-residue chain is MAFLLHQARFYTTVNHLRDLPPTVQPEIAFAGRSNAGKSTAINVLCNQKRLAFASKTPGRTQHINYFSVGPAAEPVANLVDLPGYGYAEVPGAAKAHWEMLLSSYLATRSQLCGLILMMDSRRPLTDLDRRMIEWFAPTGKPIHTLLTKCDKLTRQESINALRNTQKGLDAYRDQGVKGKLTVQLFSALKRTGLDEAHELIESWLRPSVADEKSEPVAQ.

The EngB-type G domain maps to 24-207 (VQPEIAFAGR…HELIESWLRP (184 aa)). GTP-binding positions include 32–39 (GRSNAGKS), 59–63 (GRTQH), 81–84 (DLPG), 148–151 (TKCD), and 186–188 (FSA). Mg(2+)-binding residues include S39 and T61.

Belongs to the TRAFAC class TrmE-Era-EngA-EngB-Septin-like GTPase superfamily. EngB GTPase family. Mg(2+) is required as a cofactor.

Functionally, necessary for normal cell division and for the maintenance of normal septation. This is Probable GTP-binding protein EngB from Burkholderia cenocepacia (strain HI2424).